We begin with the raw amino-acid sequence, 95 residues long: Co-chaperonin GroES (95 aa).

Belongs to the GroES chaperonin family. Heptamer of 7 subunits arranged in a ring. Interacts with the chaperonin GroEL.

It is found in the cytoplasm. Functionally, together with the chaperonin GroEL, plays an essential role in assisting protein folding. The GroEL-GroES system forms a nano-cage that allows encapsulation of the non-native substrate proteins and provides a physical environment optimized to promote and accelerate protein folding. GroES binds to the apical surface of the GroEL ring, thereby capping the opening of the GroEL channel. The polypeptide is Co-chaperonin GroES (Zymomonas mobilis subsp. mobilis (strain ATCC 31821 / ZM4 / CP4)).